The primary structure comprises 150 residues: Aspartate 1-decarboxylase 1 (150 aa).

Ser-24 functions as the Schiff-base intermediate with substrate; via pyruvic acid in the catalytic mechanism. The residue at position 24 (Ser-24) is a Pyruvic acid (Ser). Position 56 (Thr-56) interacts with substrate. Tyr-57 functions as the Proton donor in the catalytic mechanism. 72–74 (GAA) is a substrate binding site.

The protein belongs to the PanD family. In terms of assembly, heterooctamer of four alpha and four beta subunits. The cofactor is pyruvate. In terms of processing, is synthesized initially as an inactive proenzyme, which is activated by self-cleavage at a specific serine bond to produce a beta-subunit with a hydroxyl group at its C-terminus and an alpha-subunit with a pyruvoyl group at its N-terminus.

It is found in the cytoplasm. The catalysed reaction is L-aspartate + H(+) = beta-alanine + CO2. The protein operates within cofactor biosynthesis; (R)-pantothenate biosynthesis; beta-alanine from L-aspartate: step 1/1. Catalyzes the pyruvoyl-dependent decarboxylation of aspartate to produce beta-alanine. The chain is Aspartate 1-decarboxylase 1 from Mesorhizobium japonicum (strain LMG 29417 / CECT 9101 / MAFF 303099) (Mesorhizobium loti (strain MAFF 303099)).